Consider the following 306-residue polypeptide: tRNA (guanine-N(7)-)-methyltransferase (306 aa).

The segment covering 1-19 (MSSTAPLDSKATEQITTAA) has biased composition (polar residues). Residues 1–65 (MSSTAPLDSK…EASPELPSDE (65 aa)) are disordered. S-adenosyl-L-methionine-binding positions include Gly-121, 144–145 (EI), 180–181 (NA), and Cys-200. Residue Asp-203 is part of the active site. 278–280 (TEE) is an S-adenosyl-L-methionine binding site.

The protein belongs to the class I-like SAM-binding methyltransferase superfamily. TrmB family. As to quaternary structure, forms a complex with TRM82.

The protein localises to the nucleus. It catalyses the reaction guanosine(46) in tRNA + S-adenosyl-L-methionine = N(7)-methylguanosine(46) in tRNA + S-adenosyl-L-homocysteine. The protein operates within tRNA modification; N(7)-methylguanine-tRNA biosynthesis. Catalyzes the formation of N(7)-methylguanine at position 46 (m7G46) in tRNA. This Lodderomyces elongisporus (strain ATCC 11503 / CBS 2605 / JCM 1781 / NBRC 1676 / NRRL YB-4239) (Yeast) protein is tRNA (guanine-N(7)-)-methyltransferase.